A 441-amino-acid chain; its full sequence is ATP-dependent protease ATPase subunit HslU (441 aa).

ATP-binding positions include valine 18, 60 to 65 (GVGKTE), aspartate 254, glutamate 319, and arginine 391.

It belongs to the ClpX chaperone family. HslU subfamily. A double ring-shaped homohexamer of HslV is capped on each side by a ring-shaped HslU homohexamer. The assembly of the HslU/HslV complex is dependent on binding of ATP.

It is found in the cytoplasm. Functionally, ATPase subunit of a proteasome-like degradation complex; this subunit has chaperone activity. The binding of ATP and its subsequent hydrolysis by HslU are essential for unfolding of protein substrates subsequently hydrolyzed by HslV. HslU recognizes the N-terminal part of its protein substrates and unfolds these before they are guided to HslV for hydrolysis. The sequence is that of ATP-dependent protease ATPase subunit HslU from Verminephrobacter eiseniae (strain EF01-2).